The chain runs to 144 residues: Bacilliredoxin SH1478 (144 aa).

The protein belongs to the bacilliredoxin family.

The protein is Bacilliredoxin SH1478 of Staphylococcus haemolyticus (strain JCSC1435).